The primary structure comprises 294 residues: Ethanolamine ammonia-lyase small subunit (294 aa).

2 residues coordinate adenosylcob(III)alamin: Val207 and Glu228.

This sequence belongs to the EutC family. As to quaternary structure, the basic unit is a heterodimer which dimerizes to form tetramers. The heterotetramers trimerize; 6 large subunits form a core ring with 6 small subunits projecting outwards. It depends on adenosylcob(III)alamin as a cofactor.

The protein resides in the bacterial microcompartment. The catalysed reaction is ethanolamine = acetaldehyde + NH4(+). It functions in the pathway amine and polyamine degradation; ethanolamine degradation. Functionally, catalyzes the deamination of various vicinal amino-alcohols to oxo compounds. Allows this organism to utilize ethanolamine as the sole source of nitrogen and carbon in the presence of external vitamin B12. This Clostridium tetani (strain Massachusetts / E88) protein is Ethanolamine ammonia-lyase small subunit.